The sequence spans 735 residues: MDVEAKCPMGGGKVEGRAVLFEMTNRLWWPNHLDLSVLHQNPPAGNPMGEGFNYAAEFESLDLAAVKQDIFALMTESQDWWPADYGHYGPLFIRMAWHAAGTYRIGDGRGGAGAGTQRFAPLNSWPDNANLDKARLLLWPIKEKYGRKLSWGDLLILAGNCALESMGFKTAGFAGGRVDIWEPENDIFWGPEREWLGDERYSSDRDLAHPLAAVQMGLIYVNPEGPNGKPDPMAAAHDIRETFGRMAMNDEETVALIAGGHTFGKCHGAAEPSQYVGAEPEGAGIERQGLGWDNSFGSGRGVHTITSGLEGAWTKNPIQWDNGYFENLFEYEWELTKSPAGAHQWTPKNPEAASTVPDAHDPHKRHAPMMATTDLAMRADPAYEKISRRFYDNPDQLAHAFAEAWYKLTHRDMGPYARLLGPEVPSEPRIWQDPVPASDHPLIDDADIAELKAQILAAGLSIARLVTTAWASASTFRGTDKRGGANGARIRLVPQKDWAVNEPTELATALAKLEAIQQDFNAGQTGGKQVSLADLIVLGGCAAVEQAAKKAGHDITVPFTPGRTDASPDQTDVESFAPLEPKIDGFRNYVGEKSVYSAEEMLVDRAHLLTLSAPEMTVLVGGLRVLGANYGGSKLGVFTERPETLTNDFFVNLLKTSTSMKWEASPDADVFEASDRATGEKKWAGTRVDLIFGSNSQLRALSEAYATADAQQTFVDAFVAAWTKVMNLDRFDLPR.

Positions 97–220 (WHAAGTYRIG…LAAVQMGLIY (124 aa)) form a cross-link, tryptophyl-tyrosyl-methioninium (Trp-Tyr) (with M-246). H98 acts as the Proton acceptor in catalysis. Positions 220-246 (YVNPEGPNGKPDPMAAAHDIRETFGRM) form a cross-link, tryptophyl-tyrosyl-methioninium (Tyr-Met) (with W-97). H261 serves as a coordination point for heme b. The interval 342–362 (AHQWTPKNPEAASTVPDAHDP) is disordered.

Belongs to the peroxidase family. Peroxidase/catalase subfamily. As to quaternary structure, homodimer or homotetramer. The cofactor is heme b. Formation of the three residue Trp-Tyr-Met cross-link is important for the catalase, but not the peroxidase activity of the enzyme.

The enzyme catalyses H2O2 + AH2 = A + 2 H2O. It catalyses the reaction 2 H2O2 = O2 + 2 H2O. Its function is as follows. Bifunctional enzyme with both catalase and broad-spectrum peroxidase activity. This is Catalase-peroxidase from Gloeobacter violaceus (strain ATCC 29082 / PCC 7421).